A 194-amino-acid polypeptide reads, in one-letter code: Translation machinery-associated protein 22 (194 aa).

One can recognise an SUI1 domain in the interval 102-173 (VQIKRVERNK…DVQEWLLELY (72 aa)).

The protein belongs to the DENR family. In terms of assembly, interacts with the 40S ribosomal subunit.

It is found in the cytoplasm. This is Translation machinery-associated protein 22 (tma22) from Neosartorya fischeri (strain ATCC 1020 / DSM 3700 / CBS 544.65 / FGSC A1164 / JCM 1740 / NRRL 181 / WB 181) (Aspergillus fischerianus).